We begin with the raw amino-acid sequence, 292 residues long: NAC domain-containing protein 96 (292 aa).

In terms of domain architecture, NAC spans 6–158 (LPPGFRFHPT…AFVLCRVAMK (153 aa)). A DNA-binding region spans residues 106 to 164 (IGYRKTLVFYKGRAPLGDRSNWIMHEYRLCDDDTSQGSQNLKGAFVLCRVAMKNEIKTN). The interval 171–199 (PSEQTIGSGESSGLSSRVTSPSRDETMPF) is disordered. Polar residues predominate over residues 172 to 191 (SEQTIGSGESSGLSSRVTSP).

Interacts with ABF2 and ABF4. As to expression, expressed in roots, rosettes leaves, cauline leaves and stems.

Its subcellular location is the nucleus. In terms of biological role, transcriptional activator involved in the positive regulation of abscisic acid (ABA) responsive genes. Acts as a positive factor of ABA-mediated responses. Involved in the transcriptional activation of ABA-inducible genes in response to dehydration and osmotic stresses. Plays a positive role in both stomatal closure and water loss under dehydration stress conditions. Acts synergistically with ABF2 to activate the dehydration stress-response factor RD29A transcription. Binds to the consensus core cis-acting elements 5'-CGTA-3' and 5'-CACG-3' at the RD29A promoter. Involved in hypocotyl graft union formation. Required for the auxin-mediated promotion of vascular tissue proliferation during hypocotyl graft attachment. The chain is NAC domain-containing protein 96 from Arabidopsis thaliana (Mouse-ear cress).